The following is a 386-amino-acid chain: Na(+)/H(+) antiporter NhaA (386 aa).

Transmembrane regions (helical) follow at residues 10–30, 58–78, 94–114, 124–144, 154–174, 176–196, 199–219, 253–273, 283–303, 327–347, and 361–381; these read MGSA…IFAN, LLHW…GLEV, IFPA…YYLI, GWAI…ALLG, FLLA…AVFF, EELS…LITL, MKVG…AAVL, ILTP…NAGV, IFST…PLGV, VFAI…LAGL, and LSRL…YLLL.

It belongs to the NhaA Na(+)/H(+) (TC 2.A.33) antiporter family.

The protein localises to the cell inner membrane. The catalysed reaction is Na(+)(in) + 2 H(+)(out) = Na(+)(out) + 2 H(+)(in). Na(+)/H(+) antiporter that extrudes sodium in exchange for external protons. This chain is Na(+)/H(+) antiporter NhaA, found in Mannheimia succiniciproducens (strain KCTC 0769BP / MBEL55E).